The chain runs to 71 residues: Sec-independent protein translocase protein TatA (71 aa).

Residues 1–21 (MGSFSLLHWLVVLVIVLLVFG) form a helical membrane-spanning segment. The interval 43 to 71 (LHEDDKPTDQLGSTSQSTASGPQQDHGKH) is disordered. Positions 52–65 (QLGSTSQSTASGPQ) are enriched in polar residues.

It belongs to the TatA/E family. The Tat system comprises two distinct complexes: a TatABC complex, containing multiple copies of TatA, TatB and TatC subunits, and a separate TatA complex, containing only TatA subunits. Substrates initially bind to the TatABC complex, which probably triggers association of the separate TatA complex to form the active translocon.

The protein resides in the cell inner membrane. Functionally, part of the twin-arginine translocation (Tat) system that transports large folded proteins containing a characteristic twin-arginine motif in their signal peptide across membranes. TatA could form the protein-conducting channel of the Tat system. The sequence is that of Sec-independent protein translocase protein TatA from Xylella fastidiosa (strain M12).